The sequence spans 1030 residues: Teashirt homolog 2 (1030 aa).

The disordered stretch occupies residues methionine 1–histidine 120. Residues arginine 11 to glutamine 42 are a coiled coil. The span at leucine 21 to serine 37 shows a compositional bias: acidic residues. Polar residues-rich tracts occupy residues serine 39–threonine 49 and serine 66–aspartate 95. Over residues aspartate 103–histidine 120 the composition is skewed to basic and acidic residues. Lysine 189 is covalently cross-linked (Glycyl lysine isopeptide (Lys-Gly) (interchain with G-Cter in SUMO2)). 2 C2H2-type zinc fingers span residues phenylalanine 216 to histidine 240 and leucine 276 to histidine 300. Residues histidine 240–aspartate 266 form a disordered region. Glycyl lysine isopeptide (Lys-Gly) (interchain with G-Cter in SUMO2) cross-links involve residues lysine 307 and lysine 316. Positions valine 328–glutamine 348 are disordered. Over residues proline 334 to glutamine 348 the composition is skewed to polar residues. Residues leucine 381–histidine 405 form a C2H2-type 3; atypical zinc finger. Lysine 418 participates in a covalent cross-link: Glycyl lysine isopeptide (Lys-Gly) (interchain with G-Cter in SUMO2). Residues serine 432–threonine 459 show a composition bias toward polar residues. The segment at serine 432 to leucine 488 is disordered. Over residues glutamate 460–glutamate 482 the composition is skewed to basic and acidic residues. Glycyl lysine isopeptide (Lys-Gly) (interchain with G-Cter in SUMO2) cross-links involve residues lysine 462, lysine 480, lysine 497, and lysine 601. 2 stretches are compositionally biased toward basic and acidic residues: residues aspartate 608–alanine 623 and serine 633–proline 664. 3 disordered regions span residues aspartate 608 to isoleucine 687, lysine 703 to lysine 726, and glutamine 759 to glutamine 784. Lysine 652 is covalently cross-linked (Glycyl lysine isopeptide (Lys-Gly) (interchain with G-Cter in SUMO2)). Positions serine 710–proline 722 are enriched in low complexity. Residues serine 773–proline 783 are compositionally biased toward polar residues. Residues lysine 796 and lysine 816 each participate in a glycyl lysine isopeptide (Lys-Gly) (interchain with G-Cter in SUMO2) cross-link. The homeobox DNA-binding region spans arginine 837–glycine 907. The C2H2-type 4 zinc finger occupies phenylalanine 922–histidine 944. Lysine 962 is covalently cross-linked (Glycyl lysine isopeptide (Lys-Gly) (interchain with G-Cter in SUMO2)). Disordered regions lie at residues glutamine 965–aspartate 987 and leucine 1009–glutamate 1030. Positions serine 968–proline 977 are enriched in polar residues. Serine 976 bears the Phosphoserine mark. Residues phenylalanine 990–histidine 1013 form a C2H2-type 5 zinc finger.

Belongs to the teashirt C2H2-type zinc-finger protein family. In terms of assembly, interacts (via homeobox domain) with APBB1 (via PID domain 1). In terms of processing, sumoylated.

Its subcellular location is the nucleus. Probable transcriptional regulator involved in developmental processes. May act as a transcriptional repressor (Potential). The sequence is that of Teashirt homolog 2 (Tshz2) from Mus musculus (Mouse).